The chain runs to 128 residues: Large ribosomal subunit protein bL19 (128 aa).

The protein belongs to the bacterial ribosomal protein bL19 family.

In terms of biological role, this protein is located at the 30S-50S ribosomal subunit interface and may play a role in the structure and function of the aminoacyl-tRNA binding site. The polypeptide is Large ribosomal subunit protein bL19 (Paraburkholderia xenovorans (strain LB400)).